The primary structure comprises 474 residues: Equilibrative nucleoside transporter 3 (474 aa).

Over 1–53 (MAIISEDDFRHTSNSTYRTASSSLRADQEALLEKLLDRPPPSLQRPEDRFNGT) the chain is Cytoplasmic. Serine 21 and serine 23 each carry phosphoserine. The Dileucine internalization motif signature appears at 31–32 (LL). A helical transmembrane segment spans residues 54–74 (YIIFFSLGIGGLLPWNFFVTA). Residues 75 to 105 (QEYWIFKLSNCSSPAAGEEPKDSDILNYFES) lie on the Extracellular side of the membrane. Residue asparagine 84 is glycosylated (N-linked (GlcNAc...) asparagine). A helical membrane pass occupies residues 106 to 126 (YLAVASTVPSVLCLALNFLLV). The Cytoplasmic segment spans residues 127–134 (NRVPIRVR). Residues 135 to 155 (VLASLTVMLAIFIVMTVLVKV) form a helical membrane-spanning segment. Over 156–161 (DTSSWT) the chain is Extracellular. A helical transmembrane segment spans residues 162–182 (HSFFTITITCMAILSGTSTIF). The Cytoplasmic segment spans residues 183-201 (NSSVFGMTGSFPMRNSQAL). Residues 202-222 (ISGGAMGGTLSAVASLVDLAV) traverse the membrane as a helical segment. The Extracellular segment spans residues 223–230 (ASDVTDST). Residues 231–251 (LAFFLTADIFLALCIGLYLLL) form a helical membrane-spanning segment. Residues 252-305 (PRLDYARYYMKPVWPTVFSGEEQLPQDSPSPTSVAPGSSDPQTPPLGPILKKTT) lie on the Cytoplasmic side of the membrane. Residues 272 to 294 (EEQLPQDSPSPTSVAPGSSDPQT) form a disordered region. Over residues 276 to 292 (PQDSPSPTSVAPGSSDP) the composition is skewed to polar residues. A helical transmembrane segment spans residues 306-326 (GLGFCIIYLFFITSLIFPAIC). Over 327 to 339 (TNIESLSKGSGSP) the chain is Extracellular. A helical membrane pass occupies residues 340-357 (WSTKFFVPLTTFLLYNFA). Over 358–376 (DLCGRQVTAWIQVPGPRSK) the chain is Cytoplasmic. A helical membrane pass occupies residues 377–397 (ALPGLALLRTCFVPLFVFCNY). Over 398-414 (QPRGHLHTVLFQSDVYP) the chain is Extracellular. Residues 415 to 435 (VLFTSLLGLSNGYLSTLALIY) traverse the membrane as a helical segment. The Cytoplasmic segment spans residues 436-453 (GPKIVPRELAEATGVVMT). The helical transmembrane segment at 454-474 (FYMGLGLVLGSACSALLVHLI) threads the bilayer.

It belongs to the SLC29A/ENT transporter (TC 2.A.57) family.

It localises to the lysosome membrane. It is found in the late endosome membrane. The protein resides in the mitochondrion membrane. Its subcellular location is the cell membrane. It catalyses the reaction adenosine(in) = adenosine(out). The enzyme catalyses guanosine(in) = guanosine(out). The catalysed reaction is inosine(in) = inosine(out). It carries out the reaction uridine(out) = uridine(in). It catalyses the reaction cytidine(in) = cytidine(out). The enzyme catalyses thymidine(in) = thymidine(out). The catalysed reaction is 2'-deoxyadenosine(in) = 2'-deoxyadenosine(out). It carries out the reaction 2'-deoxycytidine(in) = 2'-deoxycytidine(out). It catalyses the reaction guanine(out) = guanine(in). The enzyme catalyses uracil(in) = uracil(out). The catalysed reaction is (R)-noradrenaline(out) = (R)-noradrenaline(in). It carries out the reaction dopamine(out) = dopamine(in). It catalyses the reaction serotonin(out) = serotonin(in). The enzyme catalyses tyramine(in) = tyramine(out). The catalysed reaction is ATP(in) = ATP(out). Functionally, uniporter that mediates the facilitative transport of nucleoside across lysosomal and mitochondrial membranes. Functions as a non-electrogenic Na(+)-independent transporter. Substrate transport is pH-dependent and enhanced under acidic condition, probably reflecting the location of the transporter in acidic intracellular compartments. Proton is not a cotransporting ion but most likely change the ionization state of the transporter which dictates transport-permissible/impermissible conformation for nucleoside translocation. May direct the nucleoside transport from lysosomes to cytosol or cytosol to mitochondria to facilitate the fundamental function of salvage synthesis of nucleic acids. Involved in the transport of nucleosides (adenosine, guanosine, uridine, thymidine, cytidine and inosine) and deoxynucleosides (deoxyadenosine, deoxycytidine). Also mediates transport of purine nucleobases (adenine, guanine) and pyrimidine nucleobases (uracil). Also able to transport monoamine neurotransmitters dopamine, serotonin, noradrenaline and tyramine. Capable of transporting ATP. Mediates nucleoside export from lysosomes in macrophages, which regulates macrophage functions and numbers. This Bos taurus (Bovine) protein is Equilibrative nucleoside transporter 3 (SLC29A3).